The following is a 120-amino-acid chain: MAAHQNLILKIFCLCCRDCQEPYAINDSKVPSQTQEHKPSTQNLLLQKDELDRQNPKRINAVSHLPSRTPLIQTKKSTSSSSSEFEDLNAYASQRNFYKRNLNRYCQEHWPFQPCLTGRP.

The span at K29–L45 shows a compositional bias: polar residues. The interval K29–E86 is disordered. Low complexity predominate over residues T74–S83.

In Homo sapiens (Human), this protein is Testis-expressed protein 48.